Reading from the N-terminus, the 228-residue chain is Carboxylesterase SOBER1 (228 aa).

Active-site charge relay system residues include serine 106, aspartate 160, and histidine 192.

It belongs to the AB hydrolase superfamily. AB hydrolase 2 family.

Functionally, possesses carboxylesterase activity in vitro with a preference for short acyl chain substrates. Functions as a negative regulator of the hypersensitive response (HR) triggered by the bacterial type III effector protein AvrBsT. Possesses phospholipase A2 (PLA2) activity and hydrolyzes phosphatidylcholine (PC), a lipid that is hydrolyzed by phospholipase D (PLD) to produce phosphatidic acid (PA). Required to suppress AvrBsT-dependent HR and PLD-dependent production of PA in response to AvrBsT elicitation. This Arabidopsis thaliana (Mouse-ear cress) protein is Carboxylesterase SOBER1.